The sequence spans 603 residues: Protein SHORT-ROOT 2 (603 aa).

Disordered regions lie at residues 11–58 and 106–140; these read HHHH…HSHS and DFSS…SSAG. Residues 31-44 show a composition bias toward low complexity; the sequence is SYPSSRGSTSSPSS. The span at 45-58 shows a compositional bias: basic residues; that stretch reads HHTHNHTYYHHSHS. Residues 108 to 125 are compositionally biased toward low complexity; the sequence is SSSSSSRQFHSGTGAPSS. Residues 179 to 602 enclose the GRAS domain; the sequence is AAPSSSGRWA…QPVVWASAWK (424 aa). Residues 186–249 form a leucine repeat I (LRI) region; that stretch reads RWAAQLLMEC…LTTSGPRTLR (64 aa). A VHIID region spans residues 268 to 354; the sequence is ALKFQELSPW…DTPHLSITTV (87 aa). The VHIID motif lies at 318-322; it reads LHILD. The tract at residues 370 to 406 is leucine repeat II (LRII); that stretch reads EIGQRLEKFARLMGVPFSFRAVHHSGDLADLDLAALD. Positions 416-514 are PFYRE; it reads LAVNCVNALR…ERAVGRAIVD (99 aa). The tract at residues 517-602 is SAW; that stretch reads SCPASQSAER…QPVVWASAWK (86 aa).

This sequence belongs to the GRAS family. As to quaternary structure, does not interact with SCR1.

It is found in the nucleus. Its function is as follows. Putative transcription factor involved in asymmetric cell division. This chain is Protein SHORT-ROOT 2 (SHR2), found in Oryza sativa subsp. japonica (Rice).